A 602-amino-acid polypeptide reads, in one-letter code: UvrABC system protein C (602 aa).

One can recognise a GIY-YIG domain in the interval 19 to 97; sequence EEPGVYRMIG…IKSLAPRYNI (79 aa). The UVR domain maps to 206–241; that stretch reads SEVIDDLTARMHAAAERLAFEEAAACRDQVRVLQAV.

The protein belongs to the UvrC family. Interacts with UvrB in an incision complex.

The protein resides in the cytoplasm. In terms of biological role, the UvrABC repair system catalyzes the recognition and processing of DNA lesions. UvrC both incises the 5' and 3' sides of the lesion. The N-terminal half is responsible for the 3' incision and the C-terminal half is responsible for the 5' incision. The polypeptide is UvrABC system protein C (Aromatoleum aromaticum (strain DSM 19018 / LMG 30748 / EbN1) (Azoarcus sp. (strain EbN1))).